A 559-amino-acid chain; its full sequence is 2,3-bisphosphoglycerate-independent phosphoglycerate mutase (559 aa).

The Mn(2+) site is built by Asp28 and Ser81. Ser81 functions as the Phosphoserine intermediate in the catalytic mechanism. Substrate contacts are provided by residues His140, 170 to 171 (RD), Arg206, Arg213, 286 to 289 (RADR), and Lys361. Residues Asp430, His434, Asp471, His472, and His501 each contribute to the Mn(2+) site.

Belongs to the BPG-independent phosphoglycerate mutase family. In terms of assembly, monomer. It depends on Mn(2+) as a cofactor. The N-terminus is blocked. In terms of tissue distribution, found ubiquitously in germinating seed.

Its subcellular location is the cytoplasm. It carries out the reaction (2R)-2-phosphoglycerate = (2R)-3-phosphoglycerate. Its pathway is carbohydrate degradation; glycolysis; pyruvate from D-glyceraldehyde 3-phosphate: step 3/5. Catalyzes the interconversion of 2-phosphoglycerate and 3-phosphoglycerate. The chain is 2,3-bisphosphoglycerate-independent phosphoglycerate mutase from Zea mays (Maize).